The sequence spans 202 residues: ATP-dependent Clp protease proteolytic subunit (202 aa).

Ser-106 acts as the Nucleophile in catalysis. Residue His-131 is part of the active site.

Belongs to the peptidase S14 family. In terms of assembly, fourteen ClpP subunits assemble into 2 heptameric rings which stack back to back to give a disk-like structure with a central cavity, resembling the structure of eukaryotic proteasomes.

The protein localises to the cytoplasm. The catalysed reaction is Hydrolysis of proteins to small peptides in the presence of ATP and magnesium. alpha-casein is the usual test substrate. In the absence of ATP, only oligopeptides shorter than five residues are hydrolyzed (such as succinyl-Leu-Tyr-|-NHMec, and Leu-Tyr-Leu-|-Tyr-Trp, in which cleavage of the -Tyr-|-Leu- and -Tyr-|-Trp bonds also occurs).. Functionally, cleaves peptides in various proteins in a process that requires ATP hydrolysis. Has a chymotrypsin-like activity. Plays a major role in the degradation of misfolded proteins. This is ATP-dependent Clp protease proteolytic subunit from Shewanella sp. (strain W3-18-1).